The chain runs to 1081 residues: DNA-directed RNA polymerase subunit beta (1081 aa).

This sequence belongs to the RNA polymerase beta chain family. In terms of assembly, in plastids the minimal PEP RNA polymerase catalytic core is composed of four subunits: alpha, beta, beta', and beta''. When a (nuclear-encoded) sigma factor is associated with the core the holoenzyme is formed, which can initiate transcription.

It localises to the plastid. The protein resides in the chloroplast. The catalysed reaction is RNA(n) + a ribonucleoside 5'-triphosphate = RNA(n+1) + diphosphate. Functionally, DNA-dependent RNA polymerase catalyzes the transcription of DNA into RNA using the four ribonucleoside triphosphates as substrates. In Cyanidium caldarium (Red alga), this protein is DNA-directed RNA polymerase subunit beta.